The following is a 470-amino-acid chain: PTS system trehalose-specific EIIBC component (470 aa).

In terms of domain architecture, PTS EIIB type-1 spans 1–88 (MGELNKSARQ…VKETGIGEST (88 aa)). C27 functions as the Phosphocysteine intermediate; for EIIB activity in the catalytic mechanism. C27 carries the phosphocysteine; by EIIA modification. Positions 108 to 470 (KTLADIFIPI…TYAYARFKHK (363 aa)) constitute a PTS EIIC type-1 domain. The next 10 membrane-spanning stretches (helical) occupy residues 110-130 (LADI…LMGI), 160-180 (INLI…WSAV), 183-203 (FGGN…PDLL), 234-254 (GQVL…VFLT), 263-283 (LLVV…IIIG), 301-321 (FGSF…ALVI), 326-346 (HTFL…TFLW), 347-367 (PMLA…MFIV), 403-423 (FIIA…QGVL), and 443-463 (WGAF…GTYA).

It is found in the cell membrane. It catalyses the reaction alpha,alpha-trehalose(out) + N(pros)-phospho-L-histidyl-[protein] = alpha,alpha-trehalose 6-phosphate(in) + L-histidyl-[protein]. In terms of biological role, the phosphoenolpyruvate-dependent sugar phosphotransferase system (sugar PTS), a major carbohydrate active transport system, catalyzes the phosphorylation of incoming sugar substrates concomitantly with their translocation across the cell membrane. This system is involved in trehalose transport. The protein is PTS system trehalose-specific EIIBC component (treP) of Bacillus subtilis (strain 168).